We begin with the raw amino-acid sequence, 286 residues long: Shikimate dehydrogenase (NADP(+)) (286 aa).

Shikimate-binding positions include 25–27 (SLS) and threonine 72. Lysine 76 acts as the Proton acceptor in catalysis. Position 88 (glutamate 88) interacts with NADP(+). Asparagine 97 and aspartate 113 together coordinate shikimate. Residues 138–142 (GSGGA), 162–167 (NRTIER), and isoleucine 232 contribute to the NADP(+) site. Tyrosine 234 serves as a coordination point for shikimate. Glycine 255 contributes to the NADP(+) binding site.

It belongs to the shikimate dehydrogenase family. In terms of assembly, homodimer.

It catalyses the reaction shikimate + NADP(+) = 3-dehydroshikimate + NADPH + H(+). It functions in the pathway metabolic intermediate biosynthesis; chorismate biosynthesis; chorismate from D-erythrose 4-phosphate and phosphoenolpyruvate: step 4/7. Involved in the biosynthesis of the chorismate, which leads to the biosynthesis of aromatic amino acids. Catalyzes the reversible NADPH linked reduction of 3-dehydroshikimate (DHSA) to yield shikimate (SA). This is Shikimate dehydrogenase (NADP(+)) from Magnetococcus marinus (strain ATCC BAA-1437 / JCM 17883 / MC-1).